The sequence spans 69 residues: Conotoxin Eb6.9 (69 aa).

The N-terminal stretch at 1 to 17 (VLIIAVLFLTACQLTTA) is a signal peptide. Residues 18 to 41 (ETYSRGRQKHRARRSTDKNSKWTR) constitute a propeptide that is removed on maturation. Intrachain disulfides connect Cys-43–Cys-57, Cys-50–Cys-61, and Cys-56–Cys-68.

The protein belongs to the conotoxin O1 superfamily. Expressed by the venom duct.

The protein resides in the secreted. The polypeptide is Conotoxin Eb6.9 (E1) (Conus ebraeus (Hebrew cone)).